A 215-amino-acid polypeptide reads, in one-letter code: UPF0056 membrane protein BU267 (215 aa).

A run of 6 helical transmembrane segments spans residues 14 to 34, 56 to 76, 81 to 101, 120 to 140, 150 to 170, and 189 to 209; these read FFIG…FTTM, LILL…GISI, IAGG…QFIK, VVPL…TIVW, LFLC…CFEA, and IMGL…IGAI.

The protein belongs to the UPF0056 (MarC) family.

It is found in the cell membrane. This chain is UPF0056 membrane protein BU267, found in Buchnera aphidicola subsp. Acyrthosiphon pisum (strain APS) (Acyrthosiphon pisum symbiotic bacterium).